The following is a 273-amino-acid chain: Shikimate dehydrogenase (NADP(+)) (273 aa).

Shikimate contacts are provided by residues 15 to 17 (SKS) and Thr-62. Lys-66 functions as the Proton acceptor in the catalytic mechanism. An NADP(+)-binding site is contributed by Asp-78. Residues Asn-87 and Asp-103 each coordinate shikimate. NADP(+) contacts are provided by residues 127 to 131 (GAGGA), 150 to 155 (NRTYAR), and Met-214. Tyr-216 contributes to the shikimate binding site. Residue Gly-238 participates in NADP(+) binding.

It belongs to the shikimate dehydrogenase family. Homodimer.

The enzyme catalyses shikimate + NADP(+) = 3-dehydroshikimate + NADPH + H(+). It functions in the pathway metabolic intermediate biosynthesis; chorismate biosynthesis; chorismate from D-erythrose 4-phosphate and phosphoenolpyruvate: step 4/7. Its function is as follows. Involved in the biosynthesis of the chorismate, which leads to the biosynthesis of aromatic amino acids. Catalyzes the reversible NADPH linked reduction of 3-dehydroshikimate (DHSA) to yield shikimate (SA). The polypeptide is Shikimate dehydrogenase (NADP(+)) (Yersinia enterocolitica serotype O:8 / biotype 1B (strain NCTC 13174 / 8081)).